The sequence spans 466 residues: Asparagine--tRNA ligase (466 aa).

This sequence belongs to the class-II aminoacyl-tRNA synthetase family. As to quaternary structure, homodimer.

It is found in the cytoplasm. The enzyme catalyses tRNA(Asn) + L-asparagine + ATP = L-asparaginyl-tRNA(Asn) + AMP + diphosphate + H(+). The sequence is that of Asparagine--tRNA ligase from Enterobacter sp. (strain 638).